Consider the following 503-residue polypeptide: DnaJ homolog subfamily C member 3 (503 aa).

The signal sequence occupies residues 1 to 31 (MVSAAASAGRLGSALPFLLVLLDLQYQGAEC). TPR repeat units lie at residues 37-70 (VEKQ…DSDN), 71-104 (YIAY…KQDF), 105-137 (TSRL…NPSN), 153-186 (LQRL…CVWD), 187-220 (AELR…KSDN), 221-254 (TEAF…DQDH), 267-300 (LNKQ…EPDV), 305-338 (TRAK…EPTN), and 339-372 (VNAL…SEND). A disulfide bridge connects residues Cys-247 and Cys-257. Residues Cys-312 and Cys-328 are joined by a disulfide bond. A flexible linker region spans residues 374–392 (QIREGLERAQRMLKQSQKR). The J domain occupies 393-461 (DYYKILGVKR…EMRRKFDAGE (69 aa)).

It localises to the endoplasmic reticulum. Its function is as follows. May be involved in the unfolded protein response (UPR) during ER stress. The polypeptide is DnaJ homolog subfamily C member 3 (DNAJC3) (Gallus gallus (Chicken)).